A 302-amino-acid polypeptide reads, in one-letter code: tRNA pseudouridine synthase B (302 aa).

Catalysis depends on D47, which acts as the Nucleophile.

It belongs to the pseudouridine synthase TruB family. Type 1 subfamily.

The enzyme catalyses uridine(55) in tRNA = pseudouridine(55) in tRNA. Responsible for synthesis of pseudouridine from uracil-55 in the psi GC loop of transfer RNAs. The polypeptide is tRNA pseudouridine synthase B (Methylobacillus flagellatus (strain ATCC 51484 / DSM 6875 / VKM B-1610 / KT)).